Consider the following 2696-residue polypeptide: Histone-lysine N-methyltransferase, H3 lysine-36 specific (2696 aa).

Phosphoserine is present on Ser117. Disordered regions lie at residues 207-252 (MGSE…EKAA) and 281-311 (DPDSSTSTLGNMLELPGTSSSSTSQELPFCQ). Residues 236–248 (QKNKQRNEVDGSN) are compositionally biased toward basic and acidic residues. Polar residues-rich tracts occupy residues 281–290 (DPDSSTSTLG) and 297–306 (GTSSSSTSQE). Residues 323-388 (VGDLIWAKFK…AGKAIVMFEG (66 aa)) enclose the PWWP 1 domain. Residues Ser483 and Ser486 each carry the phosphoserine modification. Residues 487-514 (ADEKEKPCAKSRARKSSDNPKRTSVKKG) are disordered. At Ser766 the chain carries Phosphoserine. The segment at 872–891 (LGEDVSDSGTSKPSKPLLFS) is disordered. Lys906 participates in a covalent cross-link: Glycyl lysine isopeptide (Lys-Gly) (interchain with G-Cter in SUMO2). Disordered stretches follow at residues 936-1035 (YRSP…DAFS), 1067-1093 (VLQGDRERGGSLRGGAEDPSKEDPLQI), 1112-1134 (SKVKQSDPGKISEKGLSFENGKG), 1243-1272 (SIGDMEKEPGIPSLTPQAELPEPAVRSEKK), 1294-1344 (PKKK…EPPV), 1382-1428 (SPRP…KKGD), and 1480-1534 (KMQC…MQGE). Residues 948-961 (SPVGVSKVLVSGGS) show a composition bias toward low complexity. A compositionally biased stretch (polar residues) spans 971 to 982 (GTQNSANPSPSG). 3 stretches are compositionally biased toward basic and acidic residues: residues 1000–1017 (SDKRDLPASGKSRSDCVT), 1070–1090 (GDRERGGSLRGGAEDPSKEDP), and 1112–1124 (SKVKQSDPGKISE). Residues 1300–1314 (KVQEQVHKVSSRCEE) are compositionally biased toward basic and acidic residues. Positions 1323 to 1337 (SSAQNKQVDENSLIS) are enriched in polar residues. A Glycyl lysine isopeptide (Lys-Gly) (interchain with G-Cter in SUMO2) cross-link involves residue Lys1339. Ser1510 is modified (phosphoserine). The span at 1513 to 1523 (ETVEEGVEHDP) shows a compositional bias: basic and acidic residues. 3 consecutive PHD-type zinc fingers follow at residues 1543–1589 (ENVC…CRTG), 1590–1646 (IHTC…CHAA), and 1707–1751 (VSWC…CKAG). In terms of domain architecture, PWWP 2 spans 1756-1818 (YREIVWVKVG…QARVFPYMEG (63 aa)). One can recognise an AWS domain in the interval 1890–1940 (SEIPRCNCKATDENPCGIDSECINRMLLYECHPTVCPAGGRCQNQCFSKRQ). Residues 1942–2059 (PEVEIFRTLQ…AGTELTFNYN (118 aa)) form the SET domain. S-adenosyl-L-methionine-binding positions include 1952-1954 (RGW), 1994-1997 (TNFY), 2020-2021 (NH), Asn2065, and Lys2071. An inhibits enzyme activity in the absence of bound histone region spans residues 2060–2066 (LECLGNG). The 17-residue stretch at 2066–2082 (GKTVCKCGAPNCSGFLG) folds into the Post-SET domain. Residues 2091–2111 (ATEEKSKKFKKKQQGKRRTQG) form a disordered region. The span at 2097–2108 (KKFKKKQQGKRR) shows a compositional bias: basic residues. The PHD-type 4; atypical zinc-finger motif lies at 2118–2165 (EDECFSCGDAGQLVSCKKPGCPKVYHADCLNLTKRPAGKWECPWHQCD). The disordered stretch occupies residues 2213-2422 (LEPGEIREYV…SLSQRLPPPE (210 aa)). A compositionally biased stretch (pro residues) spans 2222-2232 (VPPPVPLPPGP). The span at 2281 to 2298 (RPLERTDSRPQPLDKVRD) shows a compositional bias: basic and acidic residues. Residues 2303 to 2314 (GTKSQSLVSSQR) show a composition bias toward polar residues. The segment covering 2330–2348 (SDKPSPVTSPSSSPSVRSQ) has biased composition (low complexity). Ser2369 carries the post-translational modification Phosphoserine. 2 stretches are compositionally biased toward polar residues: residues 2371–2381 (RPQSLEKTSVP) and 2394–2404 (ITSSPKPQTSD). Thr2462 carries the phosphothreonine modification. 4 disordered regions span residues 2464-2499 (RQKERAASPHQVTPQADEKMPVLESSSWPASKGLGH), 2553-2575 (TQASGRASAGAEQTPGPLSQSPG), 2595-2616 (KSGQSFRSLGKAPASLPTEEKK), and 2665-2696 (LGRGQDPKPEQNTLPALNQAPSSHKCAESEQK). Ser2471 bears the Phosphoserine mark. Lys2616 participates in a covalent cross-link: Glycyl lysine isopeptide (Lys-Gly) (interchain with G-Cter in SUMO2). A compositionally biased stretch (polar residues) spans 2674-2686 (EQNTLPALNQAPS).

The protein belongs to the class V-like SAM-binding methyltransferase superfamily. As to quaternary structure, interacts with the ligand-binding domains of RARA and THRA in the absence of ligand; in the presence of ligand the interaction is severely disrupted but some binding still occurs. Interacts with the ligand-binding domains of RXRA and ESRRA only in the presence of ligand. Interacts with ZNF496. Interacts with AR DNA- and ligand-binding domains. Expressed in the fetal/adult brain, kidney, skeletal muscle, spleen, and the thymus, and faintly in the lung.

It localises to the nucleus. It is found in the chromosome. It catalyses the reaction L-lysyl(36)-[histone H3] + 2 S-adenosyl-L-methionine = N(6),N(6)-dimethyl-L-lysyl(36)-[histone H3] + 2 S-adenosyl-L-homocysteine + 2 H(+). In terms of biological role, histone methyltransferase that dimethylates Lys-36 of histone H3 (H3K36me2). Transcriptional intermediary factor capable of both negatively or positively influencing transcription, depending on the cellular context. This Homo sapiens (Human) protein is Histone-lysine N-methyltransferase, H3 lysine-36 specific (NSD1).